Consider the following 520-residue polypeptide: Ribonuclease Y (520 aa).

A helical transmembrane segment spans residues 4 to 24 (VSGILLVLIGLLAGVGLGVLL). A KH domain is found at 210 to 270 (TVSVVNLPNE…VRREVARVSL (61 aa)). The 94-residue stretch at 336–429 (VLQHSREVAF…VQAADALSGA (94 aa)) folds into the HD domain.

This sequence belongs to the RNase Y family.

Its subcellular location is the cell membrane. In terms of biological role, endoribonuclease that initiates mRNA decay. In Syntrophobacter fumaroxidans (strain DSM 10017 / MPOB), this protein is Ribonuclease Y.